Reading from the N-terminus, the 387-residue chain is Patatin-11 (387 aa).

A signal peptide spans 1 to 23; it reads MATTKSVLVLIFMILATTSSTFA. The PNPLA domain occupies 32–230; the sequence is LSTDGGGIKG…TVGDPALLSL (199 aa). The GXGXXG signature appears at 36-41; that stretch reads GGGIKG. Positions 75-79 match the GXSXG motif; sequence GTSTG. The Nucleophile role is filled by Ser-77. Asn-115 carries an N-linked (GlcNAc...) asparagine glycan. Catalysis depends on Asp-216, which acts as the Proton acceptor. A DGA/G motif is present at residues 216–218; that stretch reads DGG. A coiled-coil region spans residues 322–385; the sequence is ENALNGTTTE…DRKKLRANKA (64 aa). A glycan (N-linked (GlcNAc...) asparagine) is linked at Asn-326.

The protein belongs to the patatin family. Tuber.

The protein resides in the vacuole. Its function is as follows. Probable lipolytic acyl hydrolase (LAH), an activity which is thought to be involved in the response of tubers to pathogens. The sequence is that of Patatin-11 from Solanum tuberosum (Potato).